Reading from the N-terminus, the 184-residue chain is Thymidine kinase (184 aa).

ATP is bound by residues Ala-9–Ser-16 and Asp-82–Gln-85. Glu-83 functions as the Proton acceptor in the catalytic mechanism. Positions 140, 142, 177, and 180 each coordinate Zn(2+).

It belongs to the thymidine kinase family. As to quaternary structure, homotetramer.

The protein localises to the cytoplasm. The catalysed reaction is thymidine + ATP = dTMP + ADP + H(+). The protein is Thymidine kinase of Chromobacterium violaceum (strain ATCC 12472 / DSM 30191 / JCM 1249 / CCUG 213 / NBRC 12614 / NCIMB 9131 / NCTC 9757 / MK).